The chain runs to 162 residues: Large ribosomal subunit protein uL11 (162 aa).

The tract at residues 1-27 (MAGTIEVLVPGGEANPGPPLGPELGPT) is disordered.

Belongs to the universal ribosomal protein uL11 family. In terms of assembly, part of the 50S ribosomal subunit. Forms part of the ribosomal stalk which helps the ribosome interact with GTP-bound translation factors. Forms a heptameric L10(L12)2(L12)2(L12)2 complex, where L10 forms an elongated spine to which 3 L12 dimers bind in a sequential fashion.

Forms part of the ribosomal stalk which helps the ribosome interact with GTP-bound translation factors. The protein is Large ribosomal subunit protein uL11 of Haloarcula marismortui (strain ATCC 43049 / DSM 3752 / JCM 8966 / VKM B-1809) (Halobacterium marismortui).